The chain runs to 471 residues: Anthranilate 1,2-dioxygenase large subunit (471 aa).

Positions 52-160 (IYACHESEIP…IASYRGFVFV (109 aa)) constitute a Rieske domain. [2Fe-2S] cluster is bound by residues cysteine 93, histidine 95, cysteine 113, and histidine 116. Residues histidine 220, histidine 225, and aspartate 379 each coordinate Fe cation.

The protein belongs to the bacterial ring-hydroxylating dioxygenase alpha subunit family. In terms of assembly, the anthranilate dioxygenase (AntDO) multicomponent enzyme system is composed of an oxygenase component and a NADH:acceptor reductase component (AntC). The oxygenase component is a heterohexamer of 3 large (AntA) and 3 small (AntB) subunits. The cofactor is Fe cation. It depends on [2Fe-2S] cluster as a cofactor.

It carries out the reaction anthranilate + NADH + O2 + 3 H(+) = catechol + NH4(+) + CO2 + NAD(+). It catalyses the reaction anthranilate + NADPH + O2 + 3 H(+) = catechol + NH4(+) + CO2 + NADP(+). It functions in the pathway aromatic compound metabolism; anthranilate degradation via hydroxylation; catechol from anthranilate: step 1/1. Its function is as follows. Component of anthranilate dioxygenase multicomponent enzyme system which catalyzes the incorporation of both atoms of molecular oxygen into anthranilate to form catechol. The sequence is that of Anthranilate 1,2-dioxygenase large subunit from Acinetobacter baylyi (strain ATCC 33305 / BD413 / ADP1).